The primary structure comprises 362 residues: Phosphoserine aminotransferase (362 aa).

Arg42 contributes to the L-glutamate binding site. Pyridoxal 5'-phosphate is bound by residues 76 to 77 (AR), Trp102, Thr152, Asp172, and Gln195. Residue Lys196 is modified to N6-(pyridoxal phosphate)lysine. 237 to 238 (NT) contributes to the pyridoxal 5'-phosphate binding site.

It belongs to the class-V pyridoxal-phosphate-dependent aminotransferase family. SerC subfamily. As to quaternary structure, homodimer. Pyridoxal 5'-phosphate serves as cofactor.

Its subcellular location is the cytoplasm. The catalysed reaction is O-phospho-L-serine + 2-oxoglutarate = 3-phosphooxypyruvate + L-glutamate. It carries out the reaction 4-(phosphooxy)-L-threonine + 2-oxoglutarate = (R)-3-hydroxy-2-oxo-4-phosphooxybutanoate + L-glutamate. It functions in the pathway amino-acid biosynthesis; L-serine biosynthesis; L-serine from 3-phospho-D-glycerate: step 2/3. The protein operates within cofactor biosynthesis; pyridoxine 5'-phosphate biosynthesis; pyridoxine 5'-phosphate from D-erythrose 4-phosphate: step 3/5. Its function is as follows. Catalyzes the reversible conversion of 3-phosphohydroxypyruvate to phosphoserine and of 3-hydroxy-2-oxo-4-phosphonooxybutanoate to phosphohydroxythreonine. In Haemophilus influenzae (strain ATCC 51907 / DSM 11121 / KW20 / Rd), this protein is Phosphoserine aminotransferase.